The primary structure comprises 421 residues: Testin (421 aa).

The PET domain occupies 92–199 (MILTNPVAAK…GDVKLPREMD (108 aa)). Positions 133-164 (EKQPVAGSEGAQYRKKQLAKQLPAHDQDPSKC) are disordered. A compositionally biased stretch (basic and acidic residues) spans 155–164 (PAHDQDPSKC). LIM zinc-binding domains are found at residues 234 to 297 (YSCY…CDSE), 299 to 359 (PRCA…NHAV), and 362 to 421 (QGCH…KMMS).

This sequence belongs to the prickle / espinas / testin family. As to quaternary structure, interacts via LIM domain 1 with ZYX. Interacts (via LIM domain 3) with ENAH and VASP. Interacts with ALKBH4, talin, actin, alpha-actinin, GRIP1 and PXN. Interacts (via LIM domain 2) with ACTL7A (via N-terminus). Heterodimer with ACTL7A; the heterodimer interacts with ENAH to form a heterotrimer.

It is found in the cytoplasm. The protein localises to the cell junction. The protein resides in the focal adhesion. In terms of biological role, scaffold protein that may play a role in cell adhesion, cell spreading and in the reorganization of the actin cytoskeleton. Plays a role in the regulation of cell proliferation. May act as a tumor suppressor. This chain is Testin (TES), found in Canis lupus familiaris (Dog).